We begin with the raw amino-acid sequence, 158 residues long: NAD(P)H-quinone oxidoreductase subunit J, chloroplastic (158 aa).

Belongs to the complex I 30 kDa subunit family. As to quaternary structure, NDH is composed of at least 16 different subunits, 5 of which are encoded in the nucleus.

The protein localises to the plastid. The protein resides in the chloroplast thylakoid membrane. It catalyses the reaction a plastoquinone + NADH + (n+1) H(+)(in) = a plastoquinol + NAD(+) + n H(+)(out). It carries out the reaction a plastoquinone + NADPH + (n+1) H(+)(in) = a plastoquinol + NADP(+) + n H(+)(out). In terms of biological role, NDH shuttles electrons from NAD(P)H:plastoquinone, via FMN and iron-sulfur (Fe-S) centers, to quinones in the photosynthetic chain and possibly in a chloroplast respiratory chain. The immediate electron acceptor for the enzyme in this species is believed to be plastoquinone. Couples the redox reaction to proton translocation, and thus conserves the redox energy in a proton gradient. In Ceratophyllum demersum (Rigid hornwort), this protein is NAD(P)H-quinone oxidoreductase subunit J, chloroplastic.